A 120-amino-acid chain; its full sequence is MIKGIGIDITEIERVKKAATAHSQFIQHVLTPTELEQYSQFSGQRSVEYLAGRWSLKESFAKAYGTGIGANLGFHDIEIIDNQYGAPIVTKSPYNGNAHASVSHTATLVMTEVILESENK.

The Mg(2+) site is built by D8 and E58.

This sequence belongs to the P-Pant transferase superfamily. AcpS family. Mg(2+) serves as cofactor.

It is found in the cytoplasm. It catalyses the reaction apo-[ACP] + CoA = holo-[ACP] + adenosine 3',5'-bisphosphate + H(+). Its function is as follows. Transfers the 4'-phosphopantetheine moiety from coenzyme A to a Ser of acyl-carrier-protein. The chain is Holo-[acyl-carrier-protein] synthase from Limosilactobacillus reuteri (strain DSM 20016) (Lactobacillus reuteri).